Consider the following 1948-residue polypeptide: [F-actin]-monooxygenase MICAL2 (1948 aa).

The tract at residues 2–494 (GENEDEKQAQ…KHLYITKEMD (493 aa)) is monooxygenase domain. FAD is bound by residues cysteine 97, 116–118 (EKR), 123–125 (RNN), phenylalanine 183, tyrosine 298, and aspartate 398. The 104-residue stretch at 516-619 (DIRPNKLLTW…MVMYLSKFYE (104 aa)) folds into the Calponin-homology (CH) domain. Serine 631 carries the phosphoserine modification. The Nuclear localization signal motif lies at 660–681 (RKRTPRVDAQTEENDVNKRRRQ). Disordered regions lie at residues 664-709 (PRVD…ESGN), 753-776 (SRPP…PPLK), and 891-923 (KRVP…DSVS). Over residues 693–709 (SSRSLGSSQEYAKESGN) the composition is skewed to polar residues. The segment covering 896–917 (AHPPSPPSCLPSPDPAAAPSPP) has biased composition (pro residues). In terms of domain architecture, LIM zinc-binding spans 980–1042 (DTCYFCKKRV…KLHFAHCKTS (63 aa)). The Zn(2+) site is built by cysteine 982, cysteine 985, histidine 1003, cysteine 1006, cysteine 1009, cysteine 1012, cysteine 1032, and histidine 1035. Disordered stretches follow at residues 1045-1134 (QRKR…GQDG), 1146-1185 (SEDS…QPLT), and 1233-1298 (QSNS…DDVS). A compositionally biased stretch (basic and acidic residues) spans 1050–1059 (AELNQQREEE). Polar residues predominate over residues 1233–1243 (QSNSTPMNQRA). A compositionally biased stretch (low complexity) spans 1254–1271 (SSSSSPSLPSSFSSASVP). Positions 1277-1292 (DSSSPQVTYNLHSPQI) are enriched in polar residues. An interaction with MAPK1 region spans residues 1300 to 1339 (TPIYLRRARAQGITKEIPLYLPHSPMLESTEHCLVSPDGE). Disordered regions lie at residues 1478 to 1505 (QKKA…KSPL), 1519 to 1622 (SSEA…SSKV), 1672 to 1726 (GDFF…QAGK), and 1739 to 1767 (SGPG…QLSS). Over residues 1522–1534 (AGKKTSSKPETKT) the composition is skewed to basic and acidic residues. Residues 1570–1579 (KASAFFSLAS) show a composition bias toward low complexity. The span at 1580 to 1591 (PTSKAAQASDLS) shows a compositional bias: polar residues. A compositionally biased stretch (basic and acidic residues) spans 1672-1682 (GDFFNSPKEKG). Residue serine 1677 is modified to Phosphoserine. 2 stretches are compositionally biased toward polar residues: residues 1698–1715 (VDST…TGQD) and 1747–1756 (EDTSSPTSSS). Residues 1786–1936 (KQEELKRLHK…ERTQDQHFEN (151 aa)) form the bMERB domain.

The protein belongs to the Mical family. As to quaternary structure, interacts with PLXNA4. Interacts with RAB1B. Interacts with MAPK1/ERK2. Interacts with RAB35, RAB8A, RAB10, RAB13 and RAB15 (in their GTP-bound forms); binding to RAB35 is of low affinity compared to other Rab proteins; at least in case of RAB8A may bind 2 molecules of RAB8A simultaneously through a high and a low affinity binding site, respectively. May interact with MAPK1/ERK2. Requires FAD as cofactor.

The protein resides in the nucleus. It localises to the cytoplasm. The catalysed reaction is L-methionyl-[F-actin] + NADPH + O2 + H(+) = L-methionyl-(R)-S-oxide-[F-actin] + NADP(+) + H2O. Its function is as follows. Methionine monooxygenase that promotes depolymerization of F-actin by mediating oxidation of residues 'Met-44' and 'Met-47' on actin to form methionine-sulfoxide, resulting in actin filament disassembly and preventing repolymerization. Regulates the disassembly of branched actin networks also by oxidizing ARP3B-containing ARP2/3 complexes leading to ARP3B dissociation from the network. Acts as a key regulator of the SRF signaling pathway elicited by nerve growth factor and serum: mediates oxidation and subsequent depolymerization of nuclear actin, leading to increase MKL1/MRTF-A presence in the nucleus and promote SRF:MKL1/MRTF-A-dependent gene transcription. Does not activate SRF:MKL1/MRTF-A through RhoA. In Rattus norvegicus (Rat), this protein is [F-actin]-monooxygenase MICAL2.